We begin with the raw amino-acid sequence, 164 residues long: CASP-like protein 1C2 (164 aa).

Residues 1–8 (MAVELKKV) are Cytoplasmic-facing. Residues 9–29 (FSTILRFLALAATVVAVIVMI) form a helical membrane-spanning segment. At 30 to 53 (RSHDSAIVLNLTFSAKYNNTPAFK) the chain is on the extracellular side. The N-linked (GlcNAc...) asparagine glycan is linked to Asn-39. Residues 54-74 (YFVIAEGIASVYTIIVIFLWS) form a helical membrane-spanning segment. Residues 75–80 (KGLLGR) lie on the Cytoplasmic side of the membrane. Residues 81–101 (LIVILDMVTTVLLTSSISAAL) traverse the membrane as a helical segment. Residues 102–129 (AIAQVGKKGNSHAGWLPVCGQVPKFCDQ) are Extracellular-facing. The chain crosses the membrane as a helical span at residues 130-150 (AIIALVAGFVAAIVYFMLLLC). Residues 151-164 (SLHAVLTPIFAVKP) lie on the Cytoplasmic side of the membrane.

The protein belongs to the Casparian strip membrane proteins (CASP) family. In terms of assembly, homodimer and heterodimers.

The protein localises to the cell membrane. This is CASP-like protein 1C2 from Ricinus communis (Castor bean).